The sequence spans 354 residues: 5,10-methenyltetrahydromethanopterin hydrogenase (354 aa).

It belongs to the HMD family.

It catalyses the reaction 5,10-methenyl-5,6,7,8-tetrahydromethanopterin + H2 = 5,10-methylenetetrahydromethanopterin + H(+). It participates in one-carbon metabolism; methanogenesis from CO(2); 5,10-methylene-5,6,7,8-tetrahydromethanopterin from 5,10-methenyl-5,6,7,8-tetrahydromethanopterin (hydrogen route): step 1/1. Its function is as follows. Catalyzes the reversible reduction of methenyl-H(4)MPT(+) to methylene-H(4)MPT. This is 5,10-methenyltetrahydromethanopterin hydrogenase from Methanococcus maripaludis (strain C7 / ATCC BAA-1331).